The primary structure comprises 357 residues: Homeobox protein HMX3 (357 aa).

Disordered regions lie at residues 1–58 (MPEP…LFAP) and 129–229 (LPRP…RKKK). Residues 16–27 (PQPPPPPPPAPK) are compositionally biased toward pro residues. 2 stretches are compositionally biased toward basic and acidic residues: residues 130–140 (PRPEASEKALL) and 149–173 (TDRD…KSPD). 2 positions are modified to phosphoserine: serine 153 and serine 180. Positions 191–209 (AAPGAAGASVGAAAATPGA) are enriched in low complexity. Residues 210–223 (EDWKKGAESPEKKP) show a composition bias toward basic and acidic residues. Residues 227–286 (KKKTRTVFSRSQVFQLESTFDMKRYLSSSERAGLAASLHLTETQVKIWFQNRRNKWKRQL) constitute a DNA-binding region (homeobox).

It belongs to the HMX homeobox family.

It is found in the nucleus. Its function is as follows. Transcription factor involved in specification of neuronal cell types and which is required for inner ear and hypothalamus development. Binds to the 5'-CAAGTG-3' core sequence. Controls semicircular canal formation in the inner ear. Also required for hypothalamic/pituitary axis of the CNS. The polypeptide is Homeobox protein HMX3 (HMX3) (Homo sapiens (Human)).